Here is a 645-residue protein sequence, read N- to C-terminus: DNA mismatch repair protein MutL (645 aa).

The tract at residues 371 to 403 (VHDQKDKNHDVESHKNNLDSTSSTNNESTEVSN) is disordered. Residues 372-387 (HDQKDKNHDVESHKNN) show a composition bias toward basic and acidic residues. Residues 390–402 (STSSTNNESTEVS) are compositionally biased toward low complexity.

Belongs to the DNA mismatch repair MutL/HexB family.

In terms of biological role, this protein is involved in the repair of mismatches in DNA. It is required for dam-dependent methyl-directed DNA mismatch repair. May act as a 'molecular matchmaker', a protein that promotes the formation of a stable complex between two or more DNA-binding proteins in an ATP-dependent manner without itself being part of a final effector complex. The chain is DNA mismatch repair protein MutL from Staphylococcus epidermidis (strain ATCC 35984 / DSM 28319 / BCRC 17069 / CCUG 31568 / BM 3577 / RP62A).